The primary structure comprises 274 residues: E3 ubiquitin-protein ligase complex SLX5-SLX8 subunit SLX8 (274 aa).

Disordered stretches follow at residues 1 to 117 (MARR…GNNI) and 136 to 159 (ANTP…TNSK). Over residues 13 to 28 (ENLRIKRVRLESVRQN) the composition is skewed to basic and acidic residues. Serine 50 carries the post-translational modification Phosphoserine. At threonine 66 the chain carries Phosphothreonine. Acidic residues predominate over residues 66-75 (TSEEDGDDDL). The residue at position 67 (serine 67) is a Phosphoserine. Basic and acidic residues predominate over residues 97–108 (GNHDRETMHTEE). The segment at 206–250 (CPICFEPPETALMTLCGHVFCCPCLFQMVNSSRTCRQFGHCALCR) adopts an RING-type zinc-finger fold.

As to quaternary structure, component of the heterodimeric SUMO-targeted ubiquitin ligase (STUbL) complex composed of SLX5 and SLX8.

Its subcellular location is the nucleus. The protein localises to the chromosome. It is found in the centromere. The protein resides in the kinetochore. The catalysed reaction is S-ubiquitinyl-[E2 ubiquitin-conjugating enzyme]-L-cysteine + [acceptor protein]-L-lysine = [E2 ubiquitin-conjugating enzyme]-L-cysteine + N(6)-ubiquitinyl-[acceptor protein]-L-lysine.. It functions in the pathway protein modification; protein ubiquitination. Its function is as follows. Component of the SUMO-targeted ubiquitin ligase (STUbL) complex SLX5/SLX8 that mediates ubiquitination and subsequent desumoylation of sumoylated proteins and proteins containing SUMO-like domains for their degradation. The STUbL complex SLX5/SLX8 stimulates ubiquitin conjugating enzymes, including UBC1, UBC4, UBC5 and UBC13-MMS2, and mediates the proteolytic down-regulation of sumoylated proteins. The STUbL complex SLX5/SLX8 is involved in ubiquitin-mediated degradation of histone variant CSE4, preventing mislocalization to euchromatin. The complex plays an essential role in maintenance of chromosome stability and links SUMO-dependent ubiquitination to a centromere-specific function during mitosis. The complex is involved in proteolysis of spindle positioning protein KAR9 and ensures correct spindle function by regulating levels of microtubule-associated proteins. During replication, the complex helps to prevent DNA lesions via recombination and has a role in localizing the DNA damage protein DCD2. The complex especially ubiquitinates the nuclease YEN1 and prevents persistent accumulation of a fraction of YEN1 associated with sites of activity in late G2/M and helps maintain the balance between pro- and anti-crossover pathways during homologous recombination. It is also involved in ubiquitin-mediated degradation of DNA repair proteins RAD52 and RAD57. Finally, the complex is recruited to distinct genomic hotspots of non-H2B protein ubiquitination (ub-hotspots) by the sumoylated transcription factor-like protein EUC1 where it ubiquitinates EUC1 and presumably other targets. The chain is E3 ubiquitin-protein ligase complex SLX5-SLX8 subunit SLX8 (SLX8) from Saccharomyces cerevisiae (strain ATCC 204508 / S288c) (Baker's yeast).